We begin with the raw amino-acid sequence, 535 residues long: Peptide chain release factor 3 (535 aa).

Residues 8–278 enclose the tr-type G domain; sequence ARRRTFAIIS…VDQAPAPGPR (271 aa). GTP is bound by residues 17-24, 85-89, and 139-142; these read SHPDAGKT, DTPGH, and NKLD.

Belongs to the TRAFAC class translation factor GTPase superfamily. Classic translation factor GTPase family. PrfC subfamily.

The protein resides in the cytoplasm. Increases the formation of ribosomal termination complexes and stimulates activities of RF-1 and RF-2. It binds guanine nucleotides and has strong preference for UGA stop codons. It may interact directly with the ribosome. The stimulation of RF-1 and RF-2 is significantly reduced by GTP and GDP, but not by GMP. In Bordetella parapertussis (strain 12822 / ATCC BAA-587 / NCTC 13253), this protein is Peptide chain release factor 3.